A 251-amino-acid chain; its full sequence is Chloride intracellular channel protein 5 (251 aa).

The interval 1-98 (MTDSATANGD…EEFLEETLTP (98 aa)) is required for insertion into the membrane. A G-site motif is present at residues 32–35 (CPFS). The helical transmembrane segment at 34–54 (FSQRLFMILWLKGVVFNVTTV) threads the bilayer. Residues 101–241 (YPKLAARHRE…AADSEIELAY (141 aa)) form the GST C-terminal domain.

Belongs to the chloride channel CLIC family. In terms of assembly, component of a multimeric complex consisting of several cytoskeletal proteins, including actin, ezrin, alpha-actinin, gelsolin, and IQGAP1. Interacts with AKAP9. Interacts with TPRN. TPRN, CLIC5 and PTPQR form concentric rings at the base of stereocilia and may form a complex. Interacts with EZR, MYO6 and RDX; the proteins may work together as a complex to stabilize linkages between the plasma membrane and subjacent actin cytoskeleton at the stereocilium base. As to expression, detected in cochlea, in cochlear and vestibular hair cell bundles in the organ of Corti (at protein level). Expressed neonatal and adult cardiomyocytes (at protein level).

The protein resides in the golgi apparatus. Its subcellular location is the cytoplasm. It is found in the cytoskeleton. The protein localises to the microtubule organizing center. It localises to the centrosome. The protein resides in the cell cortex. Its subcellular location is the membrane. It is found in the apical cell membrane. The protein localises to the mitochondrion. It localises to the cell projection. The protein resides in the stereocilium. It carries out the reaction Na(+)(in) = Na(+)(out). It catalyses the reaction K(+)(in) = K(+)(out). The enzyme catalyses chloride(in) = chloride(out). With respect to regulation, inhibited by F-actin. In the soluble state, catalyzes glutaredoxin-like thiol disulfide exchange reactions with reduced glutathione as electron donor. Can insert into membranes and form non-selective ion channels almost equally permeable to Na(+), K(+) and Cl(-). Required for normal hearing. It is necessary for the formation of stereocilia in the inner ear and normal development of the organ of Corti. May play a role in the regulation of transepithelial ion absorption and secretion. Is required for the development and/or maintenance of the proper glomerular endothelial cell and podocyte architecture. Plays a role in formation of the lens suture in the eye, which is important for normal optical properties of the lens. This chain is Chloride intracellular channel protein 5 (Clic5), found in Rattus norvegicus (Rat).